The primary structure comprises 104 residues: Large ribosomal subunit protein bL21 (104 aa).

Belongs to the bacterial ribosomal protein bL21 family. As to quaternary structure, part of the 50S ribosomal subunit. Contacts protein L20.

Functionally, this protein binds to 23S rRNA in the presence of protein L20. The polypeptide is Large ribosomal subunit protein bL21 (Helicobacter hepaticus (strain ATCC 51449 / 3B1)).